A 457-amino-acid polypeptide reads, in one-letter code: Casein kinase 1-like protein 11 (457 aa).

One can recognise a Protein kinase domain in the interval 15–284 (FKLGRKLGSG…LRRLFRDLFI (270 aa)). ATP contacts are provided by residues 21 to 29 (LGSGSFGEL) and Lys-44. Asp-134 functions as the Proton acceptor in the catalytic mechanism. Disordered regions lie at residues 305-337 (GSSS…GQDL) and 352-442 (NVSS…EDAI). Residues 311-324 (RPTPRPALDPPGPP) are compositionally biased toward pro residues. Composition is skewed to polar residues over residues 383–403 (NGST…SAEP) and 409–429 (SRLF…QSYE).

It belongs to the protein kinase superfamily. CK1 Ser/Thr protein kinase family. Casein kinase I subfamily. Monomer. In terms of processing, autophosphorylated.

It localises to the cytoplasm. Its subcellular location is the nucleus. It carries out the reaction L-seryl-[protein] + ATP = O-phospho-L-seryl-[protein] + ADP + H(+). The enzyme catalyses L-threonyl-[protein] + ATP = O-phospho-L-threonyl-[protein] + ADP + H(+). Partially inhibited by N-(2-aminoethyl)-5-chloroisoquinoline-8-sulfonamide (CKI-7). Casein kinases are operationally defined by their preferential utilization of acidic proteins such as caseins as substrates. Can phosphorylate casein, phosvitin, myosin light chains and poly(Glu,Tyr) in vitro. The sequence is that of Casein kinase 1-like protein 11 from Arabidopsis thaliana (Mouse-ear cress).